Reading from the N-terminus, the 711-residue chain is C6 finger domain transcription factor nscR (711 aa).

The segment at residues 17–43 (CELCRERKVKCDKLDPCTNCSSAGVIC) is a DNA-binding region (zn(2)-C6 fungal-type). Positions 372-394 (SPPKHINDSDFDPTTSHDVPDRE) are disordered.

Its subcellular location is the nucleus. Its function is as follows. Transcription factor that specifically regulates the neosartoricin B biosynthesis gene cluster. This Trichophyton tonsurans (strain CBS 112818) (Scalp ringworm fungus) protein is C6 finger domain transcription factor nscR.